Here is a 191-residue protein sequence, read N- to C-terminus: UPF0669 protein C6orf120 homolog (191 aa).

A signal peptide spans 1 to 30; the sequence is MAAPRGRAAPWTTALLLLLTSQILSPGSCA. Residue Asn53 is glycosylated (N-linked (GlcNAc...) asparagine).

It belongs to the UPF0669 family.

The protein localises to the secreted. Its function is as follows. May be involved in induction of apoptosis in CD4(+) T-cells, but not CD8(+) T-cells or hepatocytes. The protein is UPF0669 protein C6orf120 homolog of Macaca fascicularis (Crab-eating macaque).